A 507-amino-acid chain; its full sequence is RNA demethylase ALKBH9B (507 aa).

Disordered stretches follow at residues 76–102 (GSERASNNVDDNYDEKSENGEDCDNHS) and 145–183 (QEDEFDEEEEEEEEERDSSRKGFDASSMKTPEKPKLSRD). The segment covering 89 to 100 (DEKSENGEDCDN) has biased composition (basic and acidic residues). Residues 145-160 (QEDEFDEEEEEEEEER) are compositionally biased toward acidic residues. Residues 174 to 183 (TPEKPKLSRD) show a composition bias toward basic and acidic residues. The region spanning 317-414 (VPDSCIVNIY…RISITFRKMD (98 aa)) is the Fe2OG dioxygenase domain. Fe cation is bound by residues H335, D337, and H396. 2-oxoglutarate is bound at residue R405. Residues 432–507 (EPLPLDLNRS…MPRPSRRNYG (76 aa)) are disordered. Polar residues predominate over residues 440-450 (RSGSTSRFSRL). A compositionally biased stretch (basic residues) spans 497-507 (GMPRPSRRNYG).

It belongs to the alkB family. (Microbial infection) Interacts with the capsid protein ORF3b of the alfalfa mosaic virus (AMV). The cofactor is Fe(2+).

The protein localises to the cytoplasm. The protein resides in the P-body. It localises to the cytoplasmic granule. It carries out the reaction an N(6)-methyladenosine in mRNA + 2-oxoglutarate + O2 = an adenosine in mRNA + formaldehyde + succinate + CO2. In terms of biological role, dioxygenase that demethylates RNA by oxidative demethylation: specifically demethylates N(6)-methyladenosine (m6A) RNA, the most prevalent internal modification of messenger RNA (mRNA) in higher eukaryotes. Modulates viral infection of the alfalfa mosaic virus (AMV) and the m6A abundance in its genomic RNAs. The protein is RNA demethylase ALKBH9B of Arabidopsis thaliana (Mouse-ear cress).